A 623-amino-acid chain; its full sequence is Serine/threonine-protein kinase nrc-2 (623 aa).

A disordered region spans residues 1 to 215 (MPSTKNANGE…GLGALPPPIR (215 aa)). Composition is skewed to basic and acidic residues over residues 27–36 (SKDHKDRDAH) and 170–180 (LSKEPLEESKD). Low complexity predominate over residues 199 to 209 (LAAPDADGLGA). One can recognise a Protein kinase domain in the interval 242 to 532 (FDKIKLIGKG…ASDIKTHPFF (291 aa)). Residues 248 to 256 (IGKGDVGKV) and lysine 271 each bind ATP. Aspartate 367 functions as the Proton acceptor in the catalytic mechanism. Positions 569–596 (VDISGSRQMGLKGEPLESGMVTPGENAV) are disordered.

It belongs to the protein kinase superfamily. Ser/Thr protein kinase family. KIN82 subfamily.

The catalysed reaction is L-seryl-[protein] + ATP = O-phospho-L-seryl-[protein] + ADP + H(+). It catalyses the reaction L-threonyl-[protein] + ATP = O-phospho-L-threonyl-[protein] + ADP + H(+). Controls entry of the cell into the asexual developmental program. Required to repress entry into the conidiation program. The chain is Serine/threonine-protein kinase nrc-2 (nrc-2) from Neurospora crassa (strain ATCC 24698 / 74-OR23-1A / CBS 708.71 / DSM 1257 / FGSC 987).